We begin with the raw amino-acid sequence, 332 residues long: Chitin synthase export chaperone (332 aa).

7 helical membrane passes run 51-71, 86-106, 121-141, 149-169, 182-202, 218-238, and 248-268; these read CAND…IIHV, VFYI…GVTA, GLVS…FQLY, VWLL…VSLL, PIGI…VYVV, LGDI…LYVF, and HYID…MMVY.

The protein belongs to the CHS7 family. Interacts with CHS3.

It localises to the endoplasmic reticulum membrane. Chaperone required for the export of the chitin synthase CHS3 from the endoplasmic reticulum. In Phaeosphaeria nodorum (strain SN15 / ATCC MYA-4574 / FGSC 10173) (Glume blotch fungus), this protein is Chitin synthase export chaperone (CHS7).